The chain runs to 166 residues: uncharacterized protein (166 aa).

Residues 1 to 58 (MSSEITEGDLQKFHDEHFNAKAVNLWNVAFAQNDRGGNSESANVEYTQSVERYPDGTI) form a may interact with smn1 region.

Part of the core SMN complex at least composed of smn1, yip11/gem2, gem6, gem7 and gem8. Interacts with smn1; the interaction is direct. Interacts with gem7; the interaction is direct.

Its subcellular location is the cytoplasm. It localises to the nucleus. Functionally, the SMN complex catalyzes the assembly of small nuclear ribonucleoproteins (snRNPs), the building blocks of the spliceosome, and thereby plays an important role in the splicing of cellular pre-mRNAs. Most spliceosomal snRNPs contain a common set of Sm proteins SNRPB, SNRPD1, SNRPD2, SNRPD3, SNRPE, SNRPF and SNRPG that assemble in a heptameric protein ring on the Sm site of the small nuclear RNA to form the core snRNP (Sm core). In the cytosol, the Sm proteins SNRPD1, SNRPD2, SNRPE, SNRPF and SNRPG are trapped in an inactive 6S pICln-Sm complex by the chaperone CLNS1A that controls the assembly of the core snRNP. To assemble core snRNPs, the SMN complex accepts the trapped 5Sm proteins from CLNS1A forming an intermediate. Binding of snRNA inside 5Sm triggers eviction of the SMN complex, thereby allowing binding of SNRPD3 and SNRPB to complete assembly of the core snRNP. This is an uncharacterized protein from Schizosaccharomyces pombe (strain 972 / ATCC 24843) (Fission yeast).